Reading from the N-terminus, the 207-residue chain is MAKESTTIDVGEPNTMTKSTSHVVVDEKKKKGFVAAAAGGGYKRGLAVFDFLLRLAAIGITIGASSVMFTAEETLPFFTQFLQFQAGYDDFPTFQFFVIAIAIVASYLVLSLPFSIVTIVRPLAVAPRLILLISDTVVLTLTTAAAAAAASIVYLAHNGNTNTNWLPICQQFGDFCQTASTAVVAASISVAFFVLLIVISAIALKRH.

Residue Ala2 is modified to N-acetylalanine. At Ala2–Arg44 the chain is on the cytoplasmic side. The chain crosses the membrane as a helical span at residues Gly45–Ser65. Residues Ser66–Gln95 are Extracellular-facing. Residues Phe96–Ile116 traverse the membrane as a helical segment. Over Val117 to Arg128 the chain is Cytoplasmic. A helical transmembrane segment spans residues Leu129–Ala149. Topologically, residues Ala150 to Thr181 are extracellular. Residues Ala182–Ile202 form a helical membrane-spanning segment. The Cytoplasmic segment spans residues Ala203–His207.

Belongs to the Casparian strip membrane proteins (CASP) family. As to quaternary structure, homodimer and heterodimers.

It localises to the cell membrane. In terms of biological role, regulates membrane-cell wall junctions and localized cell wall deposition. Required for establishment of the Casparian strip membrane domain (CSD) and the subsequent formation of Casparian strips, a cell wall modification of the root endodermis that determines an apoplastic barrier between the intraorganismal apoplasm and the extraorganismal apoplasm and prevents lateral diffusion. The sequence is that of Casparian strip membrane protein 1 from Raphanus raphanistrum (Wild radish).